The primary structure comprises 129 residues: Ribonuclease VapC12 (129 aa).

Residues aspartate 5 and aspartate 94 each coordinate Mg(2+).

Belongs to the PINc/VapC protein family. It depends on Mg(2+) as a cofactor.

In terms of biological role, toxic component of a type II toxin-antitoxin (TA) system. An RNase. The cognate antitoxin is VapB12. The protein is Ribonuclease VapC12 of Mycobacterium tuberculosis (strain CDC 1551 / Oshkosh).